The following is a 286-amino-acid chain: 2,3,4,5-tetrahydropyridine-2,6-dicarboxylate N-succinyltransferase (286 aa).

The protein belongs to the transferase hexapeptide repeat family.

It localises to the cytoplasm. The catalysed reaction is (S)-2,3,4,5-tetrahydrodipicolinate + succinyl-CoA + H2O = (S)-2-succinylamino-6-oxoheptanedioate + CoA. It participates in amino-acid biosynthesis; L-lysine biosynthesis via DAP pathway; LL-2,6-diaminopimelate from (S)-tetrahydrodipicolinate (succinylase route): step 1/3. This chain is 2,3,4,5-tetrahydropyridine-2,6-dicarboxylate N-succinyltransferase, found in Rhizobium leguminosarum bv. trifolii (strain WSM2304).